We begin with the raw amino-acid sequence, 160 residues long: Cyclic pyranopterin monophosphate synthase (160 aa).

Residues 75–77 (LCH) and 113–114 (ME) each bind substrate. Aspartate 128 is an active-site residue.

Belongs to the MoaC family. As to quaternary structure, homohexamer; trimer of dimers.

The enzyme catalyses (8S)-3',8-cyclo-7,8-dihydroguanosine 5'-triphosphate = cyclic pyranopterin phosphate + diphosphate. The protein operates within cofactor biosynthesis; molybdopterin biosynthesis. In terms of biological role, catalyzes the conversion of (8S)-3',8-cyclo-7,8-dihydroguanosine 5'-triphosphate to cyclic pyranopterin monophosphate (cPMP). The protein is Cyclic pyranopterin monophosphate synthase of Methylobacterium nodulans (strain LMG 21967 / CNCM I-2342 / ORS 2060).